The primary structure comprises 354 residues: Bifunctional transcriptional activator/DNA repair enzyme Ada (354 aa).

The tract at residues 1–171 (MKKATCLTDD…SSSYYRKADE (171 aa)) is methylphosphotriester-DNA--protein-cysteine methyltransferase. Thr34 is a binding site for DNA. The Nucleophile; methyl group acceptor from methylphosphotriester role is filled by Cys38. Residues Cys38 and Cys42 each coordinate Zn(2+). Positions 43, 45, and 67 each coordinate DNA. Positions 69 and 72 each coordinate Zn(2+). The HTH araC/xylS-type domain maps to 85 to 183 (DKITHACRLL…GMTAKQFRHG (99 aa)). Positions 102–121 (LEALADQVAMSPFHLHRLFK) form a DNA-binding region, H-T-H motif. The segment at 181 to 354 (RHGGENLAVR…LRREAENEER (174 aa)) is methylated-DNA--protein-cysteine methyltransferase. Cys321 serves as the catalytic Nucleophile; methyl group acceptor from either O6-methylguanine or O4-methylthymine.

It in the C-terminal section; belongs to the MGMT family. Requires Zn(2+) as cofactor.

It catalyses the reaction (2'-deoxyribonucleoside 5'-methylphosphotriester)-DNA + L-cysteinyl-[protein] = 2'-deoxyribonucleotide-DNA + S-methyl-L-cysteinyl-[protein] + H(+). The enzyme catalyses a 6-O-methyl-2'-deoxyguanosine in DNA + L-cysteinyl-[protein] = S-methyl-L-cysteinyl-[protein] + a 2'-deoxyguanosine in DNA. The catalysed reaction is a 4-O-methyl-thymidine in DNA + L-cysteinyl-[protein] = a thymidine in DNA + S-methyl-L-cysteinyl-[protein]. In terms of biological role, involved in the adaptive response to alkylation damage in DNA caused by alkylating agents. Repairs O6-methylguanine (O6-MeG) and O4-methylthymine (O4-MeT) in DNA. Repairs the methylated nucleobase in DNA by stoichiometrically transferring the methyl group to a cysteine residue in the enzyme (Cys-321). Also specifically repairs the Sp diastereomer of DNA methylphosphotriester lesions by the same mechanism, although the methyl transfer occurs onto a different cysteine residue (Cys-38). Cannot demethylate the other diastereomer, Rp-methylphosphotriester. This is a suicide reaction: the enzyme is irreversibly inactivated. The methylation of Ada by methylphosphotriesters in DNA leads to its activation as a transcriptional regulator that activates the transcription of its own gene, ada, and other alkylation resistance genes, alkA, alkB and aidB. This Escherichia coli (strain K12) protein is Bifunctional transcriptional activator/DNA repair enzyme Ada (ada).